The following is a 197-amino-acid chain: HTH-type transcriptional regulator BetI (197 aa).

The 61-residue stretch at 8–68 folds into the HTH tetR-type domain; sequence PIRRQQLIEA…ATMGYIMSML (61 aa). Positions 31 to 50 form a DNA-binding region, H-T-H motif; it reads SIALIARLAGVSNGIISHYF.

The protein operates within amine and polyamine biosynthesis; betaine biosynthesis via choline pathway [regulation]. In terms of biological role, repressor involved in the biosynthesis of the osmoprotectant glycine betaine. It represses transcription of the choline transporter BetT and the genes of BetAB involved in the synthesis of glycine betaine. This is HTH-type transcriptional regulator BetI from Pseudomonas fluorescens (strain ATCC BAA-477 / NRRL B-23932 / Pf-5).